A 465-amino-acid polypeptide reads, in one-letter code: Ribulose bisphosphate carboxylase large chain (465 aa).

Lys4 bears the N6,N6,N6-trimethyllysine mark. 2 residues coordinate substrate: Asn113 and Thr163. Catalysis depends on Lys165, which acts as the Proton acceptor. Substrate is bound at residue Lys167. Positions 191, 193, and 194 each coordinate Mg(2+). Residue Lys191 is modified to N6-carboxylysine. The active-site Proton acceptor is His284. Substrate contacts are provided by Arg285, His317, and Ser369.

It belongs to the RuBisCO large chain family. Type I subfamily. As to quaternary structure, heterohexadecamer of 8 large chains and 8 small chains; disulfide-linked. The disulfide link is formed within the large subunit homodimers. It depends on Mg(2+) as a cofactor. Post-translationally, the disulfide bond which can form in the large chain dimeric partners within the hexadecamer appears to be associated with oxidative stress and protein turnover.

It is found in the plastid. The protein resides in the chloroplast. It catalyses the reaction 2 (2R)-3-phosphoglycerate + 2 H(+) = D-ribulose 1,5-bisphosphate + CO2 + H2O. The enzyme catalyses D-ribulose 1,5-bisphosphate + O2 = 2-phosphoglycolate + (2R)-3-phosphoglycerate + 2 H(+). RuBisCO catalyzes two reactions: the carboxylation of D-ribulose 1,5-bisphosphate, the primary event in carbon dioxide fixation, as well as the oxidative fragmentation of the pentose substrate in the photorespiration process. Both reactions occur simultaneously and in competition at the same active site. This is Ribulose bisphosphate carboxylase large chain from Ailanthus altissima (Tree-of-heaven).